The chain runs to 247 residues: 1-(5-phosphoribosyl)-5-[(5-phosphoribosylamino)methylideneamino] imidazole-4-carboxamide isomerase (247 aa).

Asp8 acts as the Proton acceptor in catalysis. Asp131 acts as the Proton donor in catalysis.

Belongs to the HisA/HisF family.

It is found in the cytoplasm. The enzyme catalyses 1-(5-phospho-beta-D-ribosyl)-5-[(5-phospho-beta-D-ribosylamino)methylideneamino]imidazole-4-carboxamide = 5-[(5-phospho-1-deoxy-D-ribulos-1-ylimino)methylamino]-1-(5-phospho-beta-D-ribosyl)imidazole-4-carboxamide. The protein operates within amino-acid biosynthesis; L-histidine biosynthesis; L-histidine from 5-phospho-alpha-D-ribose 1-diphosphate: step 4/9. This chain is 1-(5-phosphoribosyl)-5-[(5-phosphoribosylamino)methylideneamino] imidazole-4-carboxamide isomerase, found in Ralstonia pickettii (strain 12J).